We begin with the raw amino-acid sequence, 70 residues long: ATP synthase subunit c (70 aa).

Transmembrane regions (helical) follow at residues Ile-4–Leu-24 and Ile-48–Ile-68.

This sequence belongs to the ATPase C chain family. As to quaternary structure, F-type ATPases have 2 components, F(1) - the catalytic core - and F(0) - the membrane proton channel. F(1) has five subunits: alpha(3), beta(3), gamma(1), delta(1), epsilon(1). F(0) has three main subunits: a(1), b(2) and c(10-14). The alpha and beta chains form an alternating ring which encloses part of the gamma chain. F(1) is attached to F(0) by a central stalk formed by the gamma and epsilon chains, while a peripheral stalk is formed by the delta and b chains.

It localises to the cell membrane. In terms of biological role, f(1)F(0) ATP synthase produces ATP from ADP in the presence of a proton or sodium gradient. F-type ATPases consist of two structural domains, F(1) containing the extramembraneous catalytic core and F(0) containing the membrane proton channel, linked together by a central stalk and a peripheral stalk. During catalysis, ATP synthesis in the catalytic domain of F(1) is coupled via a rotary mechanism of the central stalk subunits to proton translocation. Its function is as follows. Key component of the F(0) channel; it plays a direct role in translocation across the membrane. A homomeric c-ring of between 10-14 subunits forms the central stalk rotor element with the F(1) delta and epsilon subunits. In Oenococcus oeni (strain ATCC BAA-331 / PSU-1), this protein is ATP synthase subunit c.